A 427-amino-acid polypeptide reads, in one-letter code: Enolase (427 aa).

Q163 contacts (2R)-2-phosphoglycerate. E205 (proton donor) is an active-site residue. Residues D242, E285, and D312 each coordinate Mg(2+). The (2R)-2-phosphoglycerate site is built by K337, R366, S367, and K388. K337 serves as the catalytic Proton acceptor.

This sequence belongs to the enolase family. Requires Mg(2+) as cofactor.

It is found in the cytoplasm. It localises to the secreted. The protein localises to the cell surface. It carries out the reaction (2R)-2-phosphoglycerate = phosphoenolpyruvate + H2O. The protein operates within carbohydrate degradation; glycolysis; pyruvate from D-glyceraldehyde 3-phosphate: step 4/5. Functionally, catalyzes the reversible conversion of 2-phosphoglycerate (2-PG) into phosphoenolpyruvate (PEP). It is essential for the degradation of carbohydrates via glycolysis. In Albidiferax ferrireducens (strain ATCC BAA-621 / DSM 15236 / T118) (Rhodoferax ferrireducens), this protein is Enolase.